A 192-amino-acid polypeptide reads, in one-letter code: Transcription termination/antitermination protein NusG (192 aa).

The KOW domain maps to V140–L168.

It belongs to the NusG family.

Participates in transcription elongation, termination and antitermination. The polypeptide is Transcription termination/antitermination protein NusG (Rickettsia typhi (strain ATCC VR-144 / Wilmington)).